The chain runs to 226 residues: Triosephosphate isomerase (226 aa).

The active-site Electrophile is the H91. E163 acts as the Proton acceptor in catalysis. G169 and S207 together coordinate substrate.

Belongs to the triosephosphate isomerase family. As to quaternary structure, homodimer.

The protein localises to the cytoplasm. It catalyses the reaction D-glyceraldehyde 3-phosphate = dihydroxyacetone phosphate. It participates in carbohydrate biosynthesis; gluconeogenesis. The protein operates within carbohydrate degradation; glycolysis; D-glyceraldehyde 3-phosphate from glycerone phosphate: step 1/1. Involved in the gluconeogenesis. Catalyzes stereospecifically the conversion of dihydroxyacetone phosphate (DHAP) to D-glyceraldehyde-3-phosphate (G3P). The chain is Triosephosphate isomerase from Rhizobium etli (strain ATCC 51251 / DSM 11541 / JCM 21823 / NBRC 15573 / CFN 42).